We begin with the raw amino-acid sequence, 329 residues long: GTP 3',8-cyclase 1 (329 aa).

The region spanning 7–230 (GQGRQIDYLR…LDSAEQSGGP (224 aa)) is the Radical SAM core domain. Position 16 (arginine 16) interacts with GTP. The [4Fe-4S] cluster site is built by cysteine 23 and cysteine 27. Tyrosine 29 is an S-adenosyl-L-methionine binding site. Residue cysteine 30 coordinates [4Fe-4S] cluster. A GTP-binding site is contributed by arginine 65. Glycine 69 is a binding site for S-adenosyl-L-methionine. Residue threonine 96 participates in GTP binding. Serine 120 is an S-adenosyl-L-methionine binding site. Residue lysine 157 coordinates GTP. Methionine 191 contributes to the S-adenosyl-L-methionine binding site. [4Fe-4S] cluster-binding residues include cysteine 255 and cysteine 258. 260–262 (RLR) serves as a coordination point for GTP. Position 272 (cysteine 272) interacts with [4Fe-4S] cluster.

It belongs to the radical SAM superfamily. MoaA family. As to quaternary structure, monomer and homodimer. [4Fe-4S] cluster serves as cofactor.

It carries out the reaction GTP + AH2 + S-adenosyl-L-methionine = (8S)-3',8-cyclo-7,8-dihydroguanosine 5'-triphosphate + 5'-deoxyadenosine + L-methionine + A + H(+). Its pathway is cofactor biosynthesis; molybdopterin biosynthesis. Catalyzes the cyclization of GTP to (8S)-3',8-cyclo-7,8-dihydroguanosine 5'-triphosphate. This is GTP 3',8-cyclase 1 (moaA1) from Pseudomonas aeruginosa (strain ATCC 15692 / DSM 22644 / CIP 104116 / JCM 14847 / LMG 12228 / 1C / PRS 101 / PAO1).